A 259-amino-acid polypeptide reads, in one-letter code: 5'-nucleotidase SurE (259 aa).

Positions 8, 9, 39, and 95 each coordinate a divalent metal cation.

Belongs to the SurE nucleotidase family. Requires a divalent metal cation as cofactor.

Its subcellular location is the cytoplasm. The enzyme catalyses a ribonucleoside 5'-phosphate + H2O = a ribonucleoside + phosphate. In terms of biological role, nucleotidase that shows phosphatase activity on nucleoside 5'-monophosphates. The polypeptide is 5'-nucleotidase SurE (Pseudothermotoga lettingae (strain ATCC BAA-301 / DSM 14385 / NBRC 107922 / TMO) (Thermotoga lettingae)).